The sequence spans 401 residues: S-adenosylmethionine synthase (401 aa).

136-141 (GQGSVD) is an ATP binding site.

This sequence belongs to the AdoMet synthase 2 family. Requires Mg(2+) as cofactor.

The catalysed reaction is L-methionine + ATP + H2O = S-adenosyl-L-methionine + phosphate + diphosphate. Its pathway is amino-acid biosynthesis; S-adenosyl-L-methionine biosynthesis; S-adenosyl-L-methionine from L-methionine: step 1/1. Catalyzes the formation of S-adenosylmethionine from methionine and ATP. This chain is S-adenosylmethionine synthase (mat), found in Pyrococcus abyssi (strain GE5 / Orsay).